The following is a 363-amino-acid chain: Aminomethyltransferase (363 aa).

Belongs to the GcvT family. As to quaternary structure, the glycine cleavage system is composed of four proteins: P, T, L and H.

It carries out the reaction N(6)-[(R)-S(8)-aminomethyldihydrolipoyl]-L-lysyl-[protein] + (6S)-5,6,7,8-tetrahydrofolate = N(6)-[(R)-dihydrolipoyl]-L-lysyl-[protein] + (6R)-5,10-methylene-5,6,7,8-tetrahydrofolate + NH4(+). In terms of biological role, the glycine cleavage system catalyzes the degradation of glycine. The protein is Aminomethyltransferase of Prosthecochloris aestuarii (strain DSM 271 / SK 413).